A 157-amino-acid chain; its full sequence is Small heat shock protein ibp (157 aa).

Positions 35–148 (EKPISDTPTY…KPKKISINVP (114 aa)) constitute a sHSP domain.

This sequence belongs to the small heat shock protein (HSP20) family.

The sequence is that of Small heat shock protein ibp (ibp) from Buchnera aphidicola subsp. Acyrthosiphon pisum (strain APS) (Acyrthosiphon pisum symbiotic bacterium).